The primary structure comprises 379 residues: Protein RecA (379 aa).

79–86 contributes to the ATP binding site; sequence GPESSGKT.

Belongs to the RecA family.

Its subcellular location is the cytoplasm. In terms of biological role, can catalyze the hydrolysis of ATP in the presence of single-stranded DNA, the ATP-dependent uptake of single-stranded DNA by duplex DNA, and the ATP-dependent hybridization of homologous single-stranded DNAs. It interacts with LexA causing its activation and leading to its autocatalytic cleavage. The chain is Protein RecA from Streptococcus agalactiae serotype III (strain NEM316).